The chain runs to 199 residues: Fe/S biogenesis protein NfuA (199 aa).

[4Fe-4S] cluster is bound by residues Cys-151 and Cys-154.

Belongs to the NfuA family. As to quaternary structure, homodimer. It depends on [4Fe-4S] cluster as a cofactor.

Its function is as follows. Involved in iron-sulfur cluster biogenesis. Binds a 4Fe-4S cluster, can transfer this cluster to apoproteins, and thereby intervenes in the maturation of Fe/S proteins. Could also act as a scaffold/chaperone for damaged Fe/S proteins. The protein is Fe/S biogenesis protein NfuA of Xanthomonas campestris pv. campestris (strain 8004).